Consider the following 1655-residue polypeptide: Nucleoporin NUP188 (1655 aa).

The stretch at 35-62 (KQLAQIRQFLKANKTNLIESLNTIRQNV) forms a coiled coil. The segment at 250-271 (LSYLSETLISRISSLFTITTIL) is leucine-zipper. Residue Ser-340 is modified to Phosphoserine. Residue Lys-406 forms a Glycyl lysine isopeptide (Lys-Gly) (interchain with G-Cter in ubiquitin) linkage.

This sequence belongs to the Nup188 family. Component of the nuclear pore complex (NPC). NPC constitutes the exclusive means of nucleocytoplasmic transport. NPCs allow the passive diffusion of ions and small molecules and the active, nuclear transport receptor-mediated bidirectional transport of macromolecules such as proteins, RNAs, ribonucleoparticles (RNPs), and ribosomal subunits across the nuclear envelope. Due to its 8-fold rotational symmetry, all subunits are present with 8 copies or multiples thereof. Interacts with POM152 and NIC96.

Its subcellular location is the nucleus. It localises to the nuclear pore complex. The protein localises to the nucleus membrane. Its function is as follows. Functions as a component of the nuclear pore complex (NPC). NPC components, collectively referred to as nucleoporins (NUPs), can play the role of both NPC structural components and of docking or interaction partners for transiently associated nuclear transport factors. NUP188 probably plays an important role in NPC assembly and organization. This Saccharomyces cerevisiae (strain ATCC 204508 / S288c) (Baker's yeast) protein is Nucleoporin NUP188 (NUP188).